Here is a 426-residue protein sequence, read N- to C-terminus: Histidine--tRNA ligase (426 aa).

Belongs to the class-II aminoacyl-tRNA synthetase family. As to quaternary structure, homodimer.

Its subcellular location is the cytoplasm. The enzyme catalyses tRNA(His) + L-histidine + ATP = L-histidyl-tRNA(His) + AMP + diphosphate + H(+). The sequence is that of Histidine--tRNA ligase from Malacoplasma penetrans (strain HF-2) (Mycoplasma penetrans).